The primary structure comprises 345 residues: Very-long-chain 3-oxoacyl-CoA reductase (345 aa).

A helical transmembrane segment spans residues 26 to 46 (GAAVLLTTGTLFIASRVLTFV). 8 residues coordinate NADP(+): V71, D125, D133, N152, Y219, K223, I252, and S254. Y219 functions as the Proton donor in the catalytic mechanism. K223 (lowers pKa of active site Tyr) is an active-site residue.

The protein belongs to the short-chain dehydrogenases/reductases (SDR) family.

It is found in the endoplasmic reticulum membrane. It catalyses the reaction a very-long-chain (3R)-3-hydroxyacyl-CoA + NADP(+) = a very-long-chain 3-oxoacyl-CoA + NADPH + H(+). It functions in the pathway lipid metabolism; fatty acid biosynthesis. In terms of biological role, component of the microsomal membrane bound fatty acid elongation system, which produces the 26-carbon very long-chain fatty acids (VLCFA) from palmitate. Catalyzes the reduction of the 3-ketoacyl-CoA intermediate that is formed in each cycle of fatty acid elongation. VLCFAs serve as precursors for ceramide and sphingolipids. This is Very-long-chain 3-oxoacyl-CoA reductase from Aspergillus fumigatus (strain CBS 144.89 / FGSC A1163 / CEA10) (Neosartorya fumigata).